A 561-amino-acid polypeptide reads, in one-letter code: Putative transport protein YbjL (561 aa).

5 consecutive transmembrane segments (helical) span residues 8–28 (LLNG…LCLG), 32–52 (LGSI…LLGQ), 66–86 (FMLF…SIFF), 94–114 (MLAL…GKLF), and 158–178 (NLSL…IVGA). RCK C-terminal domains are found at residues 200-288 (RGLD…SFRN) and 292-373 (VFDR…RIGF). 5 helical membrane passes run 383-403 (LLAF…TFQF), 406-426 (FSFG…LGFL), 447-467 (FGLM…ISNG), 475-495 (MLIA…LFGA), and 540-560 (AIAN…WPGL).

This sequence belongs to the AAE transporter (TC 2.A.81) family. YbjL subfamily.

Its subcellular location is the cell membrane. This Salmonella arizonae (strain ATCC BAA-731 / CDC346-86 / RSK2980) protein is Putative transport protein YbjL.